Here is a 1311-residue protein sequence, read N- to C-terminus: AF4/FMR2 family member 2 (1311 aa).

3 disordered regions span residues 94–187 (LVGI…LTQD), 204–229 (PQIGEVEESNPSAKEDSNPNSSGEDA), and 377–417 (TAGH…TKSV). Over residues 101 to 111 (SVPQNPNNKNE) the composition is skewed to polar residues. Basic and acidic residues predominate over residues 155–164 (SKPEWSRDSH). Residues 165-187 (NPSTVLASQASGQPNKMQTLTQD) are compositionally biased toward polar residues. Polar residues-rich tracts occupy residues 377 to 396 (TAGHSEQSTFSIPGQESQHL) and 403 to 417 (QKWNDPTTRASTKSV). S430 carries the phosphoserine modification. 4 disordered regions span residues 457-530 (KAKP…KWQL), 574-726 (TNAS…DQEE), 818-867 (SLHA…IPEK), and 881-943 (PPCI…DKNI). Pro residues predominate over residues 465 to 477 (VNPPLATPQPPPA). Positions 478–491 (VQASGGSGSSSESE) are enriched in low complexity. T517 carries the phosphothreonine modification. Positions 582–597 (EPKERPLLSLIREKAR) are enriched in basic and acidic residues. Over residues 615–625 (STTSETVSQRT) the composition is skewed to polar residues. Basic and acidic residues predominate over residues 655-668 (PKEKESVELHDPPR). A compositionally biased stretch (basic residues) spans 669–679 (GRNKATAHKPA). The segment covering 857-867 (PIEVAEKIPEK) has biased composition (basic and acidic residues). Composition is skewed to pro residues over residues 883 to 892 (CISPAPPHKP) and 913 to 922 (FPPPLSPLPE).

Belongs to the AF4 family. Brain (most abundant in hippocampus and amygdala), placenta and lung.

The protein localises to the nucleus speckle. In terms of biological role, RNA-binding protein. Might be involved in alternative splicing regulation through an interaction with G-quartet RNA structure. In Homo sapiens (Human), this protein is AF4/FMR2 family member 2.